Here is a 471-residue protein sequence, read N- to C-terminus: Pachytene checkpoint protein 2 homolog (471 aa).

An ATP-binding site is contributed by 213-220 (GPPGTGKT).

Belongs to the AAA ATPase family. PCH2 subfamily.

In terms of biological role, plays a key role in chromosome recombination during meiosis. In Oryza sativa subsp. indica (Rice), this protein is Pachytene checkpoint protein 2 homolog.